The following is a 155-amino-acid chain: SsrA-binding protein (155 aa).

Over residues 132 to 147 (KRESIKRREQDRDIKR) the composition is skewed to basic and acidic residues. The tract at residues 132-155 (KRESIKRREQDRDIKRQMKQFNGR) is disordered.

This sequence belongs to the SmpB family.

It localises to the cytoplasm. Its function is as follows. Required for rescue of stalled ribosomes mediated by trans-translation. Binds to transfer-messenger RNA (tmRNA), required for stable association of tmRNA with ribosomes. tmRNA and SmpB together mimic tRNA shape, replacing the anticodon stem-loop with SmpB. tmRNA is encoded by the ssrA gene; the 2 termini fold to resemble tRNA(Ala) and it encodes a 'tag peptide', a short internal open reading frame. During trans-translation Ala-aminoacylated tmRNA acts like a tRNA, entering the A-site of stalled ribosomes, displacing the stalled mRNA. The ribosome then switches to translate the ORF on the tmRNA; the nascent peptide is terminated with the 'tag peptide' encoded by the tmRNA and targeted for degradation. The ribosome is freed to recommence translation, which seems to be the essential function of trans-translation. The protein is SsrA-binding protein of Streptococcus mutans serotype c (strain ATCC 700610 / UA159).